We begin with the raw amino-acid sequence, 427 residues long: F-box protein At2g16450 (427 aa).

Residues 1-45 form the F-box domain; that stretch reads MNPSPITIDLILEILSRLPAKSVRRFHCVSKRWASIFGSPYFKEL.

The chain is F-box protein At2g16450 from Arabidopsis thaliana (Mouse-ear cress).